A 274-amino-acid polypeptide reads, in one-letter code: Thiamine kinase (274 aa).

Belongs to the thiamine kinase family.

It carries out the reaction thiamine + ATP = thiamine phosphate + ADP + H(+). It participates in cofactor biosynthesis; thiamine diphosphate biosynthesis; thiamine phosphate from thiamine: step 1/1. Functionally, catalyzes the ATP-dependent phosphorylation of thiamine to thiamine phosphate. Is involved in thiamine salvage. This Escherichia coli O139:H28 (strain E24377A / ETEC) protein is Thiamine kinase.